The sequence spans 154 residues: Large ribosomal subunit protein uL30 (154 aa).

Residues 114-139 (PVLRLHPPRGGHRGQKHPTAEGGQIG) form a disordered region. The span at 119-129 (HPPRGGHRGQK) shows a compositional bias: basic residues.

It belongs to the universal ribosomal protein uL30 family. In terms of assembly, part of the 50S ribosomal subunit.

The sequence is that of Large ribosomal subunit protein uL30 from Haloquadratum walsbyi (strain DSM 16790 / HBSQ001).